The sequence spans 111 residues: Protein BEX5 (111 aa).

The span at 1–12 shows a compositional bias: basic and acidic residues; the sequence is MENVPKENKVVE. Residues 1 to 37 are disordered; that stretch reads MENVPKENKVVEKAPVQNEAPALGGGEYQEPGGNVKG. The tract at residues 100–104 is his cluster; that stretch reads HHDHH. Cys108 is a binding site for Zn(2+).

Belongs to the BEX family. In terms of processing, ubiquitinated. Degraded by the proteasome.

Its subcellular location is the cytoplasm. This chain is Protein BEX5 (BEX5), found in Homo sapiens (Human).